Here is a 184-residue protein sequence, read N- to C-terminus: Ribosome-recycling factor (184 aa).

This sequence belongs to the RRF family.

Its subcellular location is the cytoplasm. Its function is as follows. Responsible for the release of ribosomes from messenger RNA at the termination of protein biosynthesis. May increase the efficiency of translation by recycling ribosomes from one round of translation to another. The chain is Ribosome-recycling factor from Acinetobacter baumannii (strain SDF).